Here is a 332-residue protein sequence, read N- to C-terminus: Holliday junction branch migration complex subunit RuvB (332 aa).

Positions 1 to 181 (MSRILDNEIM…FGITGHMEYY (181 aa)) are large ATPase domain (RuvB-L). ATP contacts are provided by residues Leu20, Arg21, Gly62, Lys65, Thr66, Thr67, 128-130 (EDF), Arg171, Tyr181, and Arg218. Thr66 lines the Mg(2+) pocket. The small ATPAse domain (RuvB-S) stretch occupies residues 182 to 252 (AHAGLTEIVE…ITDKALTMLD (71 aa)). Residues 255–332 (HEGLDYVDQK…EHLGYEYSEK (78 aa)) form a head domain (RuvB-H) region. Residues Arg291, Arg310, Arg312, and Arg315 each coordinate DNA.

The protein belongs to the RuvB family. Homohexamer. Forms an RuvA(8)-RuvB(12)-Holliday junction (HJ) complex. HJ DNA is sandwiched between 2 RuvA tetramers; dsDNA enters through RuvA and exits via RuvB. An RuvB hexamer assembles on each DNA strand where it exits the tetramer. Each RuvB hexamer is contacted by two RuvA subunits (via domain III) on 2 adjacent RuvB subunits; this complex drives branch migration. In the full resolvosome a probable DNA-RuvA(4)-RuvB(12)-RuvC(2) complex forms which resolves the HJ.

Its subcellular location is the cytoplasm. It carries out the reaction ATP + H2O = ADP + phosphate + H(+). Its function is as follows. The RuvA-RuvB-RuvC complex processes Holliday junction (HJ) DNA during genetic recombination and DNA repair, while the RuvA-RuvB complex plays an important role in the rescue of blocked DNA replication forks via replication fork reversal (RFR). RuvA specifically binds to HJ cruciform DNA, conferring on it an open structure. The RuvB hexamer acts as an ATP-dependent pump, pulling dsDNA into and through the RuvAB complex. RuvB forms 2 homohexamers on either side of HJ DNA bound by 1 or 2 RuvA tetramers; 4 subunits per hexamer contact DNA at a time. Coordinated motions by a converter formed by DNA-disengaged RuvB subunits stimulates ATP hydrolysis and nucleotide exchange. Immobilization of the converter enables RuvB to convert the ATP-contained energy into a lever motion, pulling 2 nucleotides of DNA out of the RuvA tetramer per ATP hydrolyzed, thus driving DNA branch migration. The RuvB motors rotate together with the DNA substrate, which together with the progressing nucleotide cycle form the mechanistic basis for DNA recombination by continuous HJ branch migration. Branch migration allows RuvC to scan DNA until it finds its consensus sequence, where it cleaves and resolves cruciform DNA. The chain is Holliday junction branch migration complex subunit RuvB from Streptococcus pneumoniae (strain JJA).